Consider the following 615-residue polypeptide: Ras association domain-containing protein 1 homolog (615 aa).

Disordered regions lie at residues 1–29 and 69–89; these read MLRS…PTYQ and SDDE…QSIG. Residues 76 to 87 show a composition bias toward low complexity; sequence TSSTSSPQSEQS. Residues 164 to 214 form a Phorbol-ester/DAG-type zinc finger; that stretch reads NHSFKTHSLLHPTWCDKCGDFIWGILKEALKCEHCNYTCHARCRDLVTLDC. Residues 249 to 268 form a disordered region; the sequence is PAMSSSTGSDKENGNGNSAG. The span at 251–268 shows a compositional bias: polar residues; it reads MSSSTGSDKENGNGNSAG. A Ras-associating domain is found at 396-496; sequence KTTSLRTITS…RALVLQENDT (101 aa). Residues 498–545 form the SARAH domain; sequence DILWDAFEIPELENFLRILGMEEKQYVFQTQQKYQQYRYHLDAELRQR.

Interacts with rab-39 (GTP-bound form). Interacts (via SARAH domain) with cst-1; the interaction is required for the phosphorylation of cst-1. Expressed in the pharynx, epithelial cells, ciliated neurons in the head, body wall muscles, hypodermis, vulva, gonadal sheath cells, tail hypodermis and in coelomocytes. In terms of tissue distribution, expressed in the pharynx, neurons and vulva.

The protein localises to the cytoplasm. The protein resides in the cytoskeleton. In terms of biological role, involved in embryonic morphogenesis. Plays a role in the organization of apical filamentous actin in epithelial cells of the developing embryo. May play a role in let-60-mediated vulval development. May induce nuclear condensation. Positively regulates the oxidative stress response, and this may be in association with the small GTPase rab-39. Not required for muscle integrity. This Caenorhabditis elegans protein is Ras association domain-containing protein 1 homolog.